Consider the following 254-residue polypeptide: 5'-nucleotidase SurE (254 aa).

Residues Asp8, Asp9, Ser38, and Asn91 each contribute to the a divalent metal cation site.

The protein belongs to the SurE nucleotidase family. The cofactor is a divalent metal cation.

It localises to the cytoplasm. The catalysed reaction is a ribonucleoside 5'-phosphate + H2O = a ribonucleoside + phosphate. Nucleotidase that shows phosphatase activity on nucleoside 5'-monophosphates. In Anaeromyxobacter sp. (strain Fw109-5), this protein is 5'-nucleotidase SurE.